Here is a 1029-residue protein sequence, read N- to C-terminus: Carbamoyl phosphate synthase large chain (1029 aa).

Residues 1–402 are carboxyphosphate synthetic domain; it reads MPKRTDLQTI…SLQKALRSTE (402 aa). ATP contacts are provided by Arg129, Arg169, Gly175, Gly176, Glu208, Ile210, Glu215, Gly241, Val242, His243, Gln285, and Glu299. Residues 133 to 328 enclose the ATP-grasp 1 domain; it reads QAAMKKIGVE…IAKIAALLAV (196 aa). Residues Gln285, Glu299, and Asn301 each contribute to the Mg(2+) site. Residues Gln285, Glu299, and Asn301 each contribute to the Mn(2+) site. An oligomerization domain region spans residues 403–546; sequence SDVRGAFAEM…YSTYEWEDEV (144 aa). The carbamoyl phosphate synthetic domain stretch occupies residues 547–929; the sequence is TPTDKPKVVI…AYYRAELGAK (383 aa). Residues 671 to 863 enclose the ATP-grasp 2 domain; that stretch reads NALCERLGLP…LAKYAARIAV (193 aa). ATP contacts are provided by Arg707, Gln747, Leu749, Glu754, Gly779, Val780, His781, Ser782, Gln822, and Glu834. Gln822, Glu834, and Asn836 together coordinate Mg(2+). Positions 822, 834, and 836 each coordinate Mn(2+). Positions 930 to 1028 constitute an MGS-like domain; the sequence is SNLPLSGTAL…QAWQQREAAA (99 aa). Residues 930-1029 are allosteric domain; it reads SNLPLSGTAL…AWQQREAAAS (100 aa).

The protein belongs to the CarB family. As to quaternary structure, composed of two chains; the small (or glutamine) chain promotes the hydrolysis of glutamine to ammonia, which is used by the large (or ammonia) chain to synthesize carbamoyl phosphate. Tetramer of heterodimers (alpha,beta)4. Requires Mg(2+) as cofactor. It depends on Mn(2+) as a cofactor.

The enzyme catalyses hydrogencarbonate + L-glutamine + 2 ATP + H2O = carbamoyl phosphate + L-glutamate + 2 ADP + phosphate + 2 H(+). It catalyses the reaction hydrogencarbonate + NH4(+) + 2 ATP = carbamoyl phosphate + 2 ADP + phosphate + 2 H(+). It participates in amino-acid biosynthesis; L-arginine biosynthesis; carbamoyl phosphate from bicarbonate: step 1/1. It functions in the pathway pyrimidine metabolism; UMP biosynthesis via de novo pathway; (S)-dihydroorotate from bicarbonate: step 1/3. Large subunit of the glutamine-dependent carbamoyl phosphate synthetase (CPSase). CPSase catalyzes the formation of carbamoyl phosphate from the ammonia moiety of glutamine, carbonate, and phosphate donated by ATP, constituting the first step of 2 biosynthetic pathways, one leading to arginine and/or urea and the other to pyrimidine nucleotides. The large subunit (synthetase) binds the substrates ammonia (free or transferred from glutamine from the small subunit), hydrogencarbonate and ATP and carries out an ATP-coupled ligase reaction, activating hydrogencarbonate by forming carboxy phosphate which reacts with ammonia to form carbamoyl phosphate. This Deinococcus geothermalis (strain DSM 11300 / CIP 105573 / AG-3a) protein is Carbamoyl phosphate synthase large chain.